A 234-amino-acid polypeptide reads, in one-letter code: Peptidase E (234 aa).

Active-site charge relay system residues include Ser-123, Asp-138, and His-160.

It belongs to the peptidase S51 family.

The protein resides in the cytoplasm. It catalyses the reaction Dipeptidase E catalyzes the hydrolysis of dipeptides Asp-|-Xaa. It does not act on peptides with N-terminal Glu, Asn or Gln, nor does it cleave isoaspartyl peptides.. Hydrolyzes dipeptides containing N-terminal aspartate residues. May play a role in allowing the cell to use peptide aspartate to spare carbon otherwise required for the synthesis of the aspartate family of amino acids. The chain is Peptidase E from Pasteurella multocida (strain Pm70).